The chain runs to 477 residues: Protein kinase C and casein kinase substrate in neurons protein 2 (477 aa).

The F-BAR domain maps to 11 to 282; sequence VEVSSDSFWE…AIKSADAMED (272 aa). The stretch at 25 to 274 forms a coiled coil; sequence KRTVKRIDDG…SIYRELEYAI (250 aa). 2 stretches are compositionally biased toward basic and acidic residues: residues 163–176 and 186–216; these read CKEEKLATSRETNS and QLKKLQDKVEKSKQDSQKTKEKYEKSLKDLD. Disordered stretches follow at residues 163–218 and 314–412; these read CKEE…LDGT and RREK…PFDE. Residues 328-341 are compositionally biased toward low complexity; the sequence is GISQSGEQSSIQNQ. Residues 342–357 are compositionally biased toward polar residues; sequence HSSHLSVQSAQSTNNP. The NPF1 motif lies at 356–358; it reads NPF. The span at 370-388 shows a compositional bias: basic and acidic residues; it reads TENKKIENVGSYEKTHPAE. Over residues 395–407 the composition is skewed to polar residues; the sequence is NNPFNPSDTNGDN. An NPF2 motif is present at residues 396-398; that stretch reads NPF. Residues 408-410 carry the NPF3 motif; sequence NPF. Positions 417–477 constitute an SH3 domain; it reads TLEVRVRALY…YPANYVESVQ (61 aa).

Belongs to the PACSIN family. Interacts with adam13 through the SH3 domains. Phosphorylated. As to expression, ubiquitously expressed with higher expression in the ectoderm, the neuroectoderm, and dorsal mesoderm layers.

It localises to the cytoplasm. The protein resides in the cytoskeleton. The protein localises to the cytoplasmic vesicle membrane. Its subcellular location is the cell projection. It is found in the ruffle membrane. It localises to the early endosome. The protein resides in the recycling endosome membrane. The protein localises to the cell membrane. Its subcellular location is the membrane. It is found in the caveola. It localises to the cell junction. The protein resides in the adherens junction. Regulates the morphogenesis and endocytosis of caveolae. Lipid-binding protein that is able to promote the tubulation of the phosphatidic acid-containing membranes it preferentially binds. Plays a role in intracellular vesicle-mediated transport. Involved in the endocytosis of cell-surface receptors like the EGF receptor, contributing to its internalization in the absence of EGF stimulus. The chain is Protein kinase C and casein kinase substrate in neurons protein 2 (pacsin2) from Xenopus laevis (African clawed frog).